The chain runs to 231 residues: GTP-binding protein RHO3 (231 aa).

23–30 (GDGACGKT) provides a ligand contact to GTP. Residues 45–53 (YEPTVFENY) carry the Effector region motif. GTP contacts are provided by residues 70–74 (DTAGQ) and 128–131 (LKCD). A compositionally biased stretch (polar residues) spans 139–150 (SNAITPNNIQQD). The disordered stretch occupies residues 139–165 (SNAITPNNIQQDNSVSNDNGNNINSTS). The segment covering 151–165 (NSVSNDNGNNINSTS) has biased composition (low complexity). Cys-228 carries the post-translational modification Cysteine methyl ester. Cys-228 carries S-farnesyl cysteine lipidation. Residues 229 to 231 (TIM) constitute a propeptide, removed in mature form.

This sequence belongs to the small GTPase superfamily. Rho family. In terms of assembly, interacts with TOS7.

The protein resides in the cell membrane. Activity is positively regulated by the GTPase activating protein (GAP) RGD1. Plays an important role in cell growth. Required to keep the uninucleated state. Modulates morphogenesis during bud growth via directing organization of the actin cytoskeleton and the position of the secretory machinery for exocytosis. This chain is GTP-binding protein RHO3, found in Saccharomyces cerevisiae (strain ATCC 204508 / S288c) (Baker's yeast).